A 193-amino-acid polypeptide reads, in one-letter code: Interferon type A3 (193 aa).

An N-terminal signal peptide occupies residues 1 to 31; sequence MAVPASPQHPRGYGILLLTLLLKALATTASA. Disulfide bonds link C32–C129, C61–C155, and C68–C168. 4 N-linked (GlcNAc...) asparagine glycosylation sites follow: N65, N71, N108, and N186.

This sequence belongs to the alpha/beta interferon family.

It localises to the secreted. In terms of biological role, has antiviral activities. In Gallus gallus (Chicken), this protein is Interferon type A3 (IFNA3).